Here is a 932-residue protein sequence, read N- to C-terminus: DNA mismatch repair protein MutS (932 aa).

Residue 615–622 (GPNMAGKS) participates in ATP binding.

It belongs to the DNA mismatch repair MutS family.

Functionally, this protein is involved in the repair of mismatches in DNA. It is possible that it carries out the mismatch recognition step. This protein has a weak ATPase activity. In Clostridium botulinum (strain 657 / Type Ba4), this protein is DNA mismatch repair protein MutS.